The primary structure comprises 382 residues: SOX domain-containing protein dichaete (382 aa).

2 disordered regions span residues 53–142 and 346–382; these read GGSP…EGHI and YPSS…PVLY. Positions 60-69 are enriched in gly residues; that stretch reads AGQGVNGSSG. Low complexity predominate over residues 96–123; sequence NSSIGSAGSLGSQSSLGSNGSGLNSSSG. Residues 142–210 constitute a DNA-binding region (HMG box); it reads IKRPMNAFMV…LHMKEHPDYK (69 aa). Over residues 347–360 the composition is skewed to low complexity; it reads PSSSTSSPGSSPGT.

As to expression, initially expressed in a pair-rule-like pattern which is rapidly replaced by strong neuroectoderm expression.

It is found in the nucleus. Its function is as follows. Essential for segmentation and CNS development. May modulate the actions of other transcription factors, including gap and pair-rule proteins. In Drosophila melanogaster (Fruit fly), this protein is SOX domain-containing protein dichaete (D).